The primary structure comprises 180 residues: Inner membrane-spanning protein YciB (180 aa).

Helical transmembrane passes span 25 to 45 (QNAT…CYVI), 49 to 69 (VSKL…ITLI), 76 to 96 (IKIK…MSGI), 118 to 138 (IILS…NEIV), and 150 to 170 (FKVF…LPLL).

Belongs to the YciB family.

It is found in the cell inner membrane. In terms of biological role, plays a role in cell envelope biogenesis, maintenance of cell envelope integrity and membrane homeostasis. The chain is Inner membrane-spanning protein YciB from Rickettsia felis (strain ATCC VR-1525 / URRWXCal2) (Rickettsia azadi).